The primary structure comprises 184 residues: Der GTPase-activating protein YihI (184 aa).

2 disordered regions span residues 1-106 (MNRP…PTMS) and 159-184 (LGDD…KDAL). Residues 8–32 (VADKAEKSKVKRKTREELEREARER) show a composition bias toward basic and acidic residues. Positions 159-169 (LGDDDEEEQQE) are enriched in acidic residues.

Belongs to the YihI family. As to quaternary structure, interacts with Der.

In terms of biological role, a GTPase-activating protein (GAP) that modifies Der/EngA GTPase function. May play a role in ribosome biogenesis. This is Der GTPase-activating protein YihI from Pectobacterium atrosepticum (strain SCRI 1043 / ATCC BAA-672) (Erwinia carotovora subsp. atroseptica).